The chain runs to 160 residues: Sperm protein associated with the nucleus on the X chromosome N2 (160 aa).

2 disordered regions span residues 1 to 48 (MEKP…TSEY) and 64 to 160 (SNQL…GEED). A compositionally biased stretch (basic and acidic residues) spans 10–35 (GEKRKSPCDSNNRNDEMQETPNRDLA). Residues 64-79 (SNQLENDQSQENSVNP) are compositionally biased toward polar residues. The span at 81–97 (QEEEDEGSSQEDEDLDS) shows a compositional bias: acidic residues. Residues 136–148 (SSERSSQEEKDPD) are compositionally biased toward basic and acidic residues.

The protein belongs to the SPAN-X family.

This is Sperm protein associated with the nucleus on the X chromosome N2 (SPANXN2) from Pongo pygmaeus (Bornean orangutan).